A 311-amino-acid chain; its full sequence is Homeobox protein CDX-2 (311 aa).

Residue serine 60 is modified to Phosphoserine. Residues 111–151 (EYHAHHHPHHHPHHPAASPSCASGLLQTLNLGPPGPAATAA) are disordered. Positions 114–124 (AHHHPHHHPHH) are enriched in basic residues. The segment at 185–215 (KDKYRVVYTDHQRLELEKEFHFSRYITIRRK) is interaction with DNA. The homeobox DNA-binding region spans 185 to 244 (KDKYRVVYTDHQRLELEKEFHFSRYITIRRKSELAATLGLSERQVKIWFQNRRAKERKIK). An interaction with 5-mCpG DNA region spans residues 227–241 (RQVKIWFQNRRAKER). The disordered stretch occupies residues 239–311 (KERKIKKKQQ…GGVLNSTVTQ (73 aa)). Low complexity predominate over residues 248-257 (QQQQQQQQQQ). Over residues 258 to 268 (PPQPPPQPSQP) the composition is skewed to pro residues. Phosphoserine; by CDK2 is present on serine 281. Residues 281–293 (SPVTSLQGSVPGS) carry the 4S motif; modulates transactivation activity and protein stability motif. The span at 285-298 (SLQGSVPGSVPGVL) shows a compositional bias: low complexity.

This sequence belongs to the Caudal homeobox family. Can bind DNA as a monomer or homodimer. In terms of processing, ubiquitinated, leading to its degradation by the proteasome. Phosphorylation at Ser-60 reduces transactivation capacity. Phosphorylation at Ser-281 reduces transactivation capacity and increases ubiquitin-dependent proteasome degradation. In the intestine, detected in ileum and proximal and distal colon (at protein level). In adult small intestine, predominantly localized in crypt and lower villus cells of the epithelium (at protein level). Expressed in the intestine but not detected in other tissues including stomach, liver, kidney, spleen, brain, heart, lung, pancreas, skeletal muscle and testis. Expressed specifically in gut epithelium where it is not restricted to a particular cell lineage. Abundant expression is seen in the proximal colon with slightly lower levels in distal colon. Expression in the proximal colon is not restricted either to a particular cell lineage or stage of differentiation while in the distal colon it is more abundant in the differentiated cells towards the top of the crypt.

The protein localises to the nucleus. Functionally, transcription factor which regulates the transcription of multiple genes expressed in the intestinal epithelium. Binds to the promoter of the intestinal sucrase-isomaltase SI and activates SI transcription. Binds to the DNA sequence 5'-ATAAAAACTTAT-3' in the promoter region of VDR and activates VDR transcription. Binds to and activates transcription of LPH. Activates transcription of CLDN2 and intestinal mucin MUC2. Binds to the 5'-AATTTTTTACAACACCT-3' DNA sequence in the promoter region of CA1 and activates CA1 transcription. Important in broad range of functions from early differentiation to maintenance of the intestinal epithelial lining of both the small and large intestine. Binds preferentially to methylated DNA. This Mus musculus (Mouse) protein is Homeobox protein CDX-2 (Cdx2).